Here is a 314-residue protein sequence, read N- to C-terminus: Taste receptor type 2 member 42 (314 aa).

The Extracellular segment spans residues 1–7 (MATELDK). A helical transmembrane segment spans residues 8–28 (IFLILEIAEFIIGMLGNVFIG). The Cytoplasmic portion of the chain corresponds to 29–50 (LVNCSEGIKNQKVFSADFILTC). Residues 51 to 71 (LAISTIGQLFVILFDSFLVGL) form a helical membrane-spanning segment. Over 72–101 (ASHLYTTYRLGKPVIMLWHMTNHLTTWLAT) the chain is Extracellular. Residues 102-122 (CLSIFYFFKIAHFPHSLFLWL) traverse the membrane as a helical segment. Topologically, residues 123 to 127 (RWRMN) are cytoplasmic. Residues 128–148 (GMIVMLLILSLFLLIFNSLVL) form a helical membrane-spanning segment. At 149-187 (EIFIDISLNIIDKSNLTLYLDESKTVYDKLSILKTLLSL) the chain is on the extracellular side. N-linked (GlcNAc...) asparagine glycosylation occurs at Asn-163. The chain crosses the membrane as a helical span at residues 188–208 (TSFIPFSLSLTSLLFLFLSLV). Residues 209 to 238 (RHTRNLKLSSLGSRDSSTEAHRRAMKMVMS) lie on the Cytoplasmic side of the membrane. A helical transmembrane segment spans residues 239–259 (FLFLFIVHFFSLQVANWIFFM). Topologically, residues 260 to 265 (LWNNKY) are extracellular. The chain crosses the membrane as a helical span at residues 266–286 (IKFAMLALNAFPSCHSFILIL). Residues 287 to 314 (GNSKLRQTAVRLLWHLRNYTKTPNPLPL) are Cytoplasmic-facing.

Belongs to the G-protein coupled receptor T2R family.

The protein resides in the membrane. Its function is as follows. Receptor that may play a role in the perception of bitterness and is gustducin-linked. May play a role in sensing the chemical composition of the gastrointestinal content. The activity of this receptor may stimulate alpha gustducin, mediate PLC-beta-2 activation and lead to the gating of TRPM5. In Pan troglodytes (Chimpanzee), this protein is Taste receptor type 2 member 42 (TAS2R42).